A 1342-amino-acid chain; its full sequence is DNA-directed RNA polymerase subunit beta (1342 aa).

This sequence belongs to the RNA polymerase beta chain family. In terms of assembly, the RNAP catalytic core consists of 2 alpha, 1 beta, 1 beta' and 1 omega subunit. When a sigma factor is associated with the core the holoenzyme is formed, which can initiate transcription.

The catalysed reaction is RNA(n) + a ribonucleoside 5'-triphosphate = RNA(n+1) + diphosphate. DNA-dependent RNA polymerase catalyzes the transcription of DNA into RNA using the four ribonucleoside triphosphates as substrates. The polypeptide is DNA-directed RNA polymerase subunit beta (Aliivibrio fischeri (strain ATCC 700601 / ES114) (Vibrio fischeri)).